Consider the following 458-residue polypeptide: BUD13 homolog (458 aa).

3 disordered regions span residues 16 to 37 (SGDI…SGLR), 81 to 328 (KQTF…TEEL), and 437 to 458 (AKTE…AEYE). The span at 138-148 (NRHDSDKDNSP) shows a compositional bias: basic and acidic residues. Composition is skewed to basic residues over residues 175-185 (RNRRSPPRTRR) and 208-218 (PRRRPSSPARR). 3 stretches are compositionally biased toward basic and acidic residues: residues 219–243 (RKDD…KKEE), 266–284 (RDLK…KMFE), and 314–328 (DQAK…TEEL). A coiled-coil region spans residues 262–356 (LQSARDLKEE…AQLEEMARVA (95 aa)).

It belongs to the CWC26 family.

This chain is BUD13 homolog, found in Caenorhabditis elegans.